The primary structure comprises 311 residues: Tyrosine recombinase XerC (311 aa).

In terms of domain architecture, Core-binding (CB) spans 14–100 (ESLNETAKKF…SLRTFYKVLL (87 aa)). The 183-residue stretch at 121–303 (EVPKNFRINE…SKEKIKEVYR (183 aa)) folds into the Tyr recombinase domain. Catalysis depends on residues arginine 163, lysine 187, histidine 255, arginine 258, and histidine 281. Tyrosine 290 functions as the O-(3'-phospho-DNA)-tyrosine intermediate in the catalytic mechanism.

The protein belongs to the 'phage' integrase family. XerC subfamily. As to quaternary structure, forms a cyclic heterotetrameric complex composed of two molecules of XerC and two molecules of XerD.

It is found in the cytoplasm. Site-specific tyrosine recombinase, which acts by catalyzing the cutting and rejoining of the recombining DNA molecules. The XerC-XerD complex is essential to convert dimers of the bacterial chromosome into monomers to permit their segregation at cell division. It also contributes to the segregational stability of plasmids. In Leptospira interrogans serogroup Icterohaemorrhagiae serovar copenhageni (strain Fiocruz L1-130), this protein is Tyrosine recombinase XerC.